Reading from the N-terminus, the 272-residue chain is 2,3,4,5-tetrahydropyridine-2,6-dicarboxylate N-succinyltransferase (272 aa).

Substrate-binding residues include Arg-104 and Asp-141.

Belongs to the transferase hexapeptide repeat family. Homotrimer.

The protein localises to the cytoplasm. The enzyme catalyses (S)-2,3,4,5-tetrahydrodipicolinate + succinyl-CoA + H2O = (S)-2-succinylamino-6-oxoheptanedioate + CoA. Its pathway is amino-acid biosynthesis; L-lysine biosynthesis via DAP pathway; LL-2,6-diaminopimelate from (S)-tetrahydrodipicolinate (succinylase route): step 1/3. The protein is 2,3,4,5-tetrahydropyridine-2,6-dicarboxylate N-succinyltransferase of Dechloromonas aromatica (strain RCB).